Here is a 215-residue protein sequence, read N- to C-terminus: Cytochrome b6 (215 aa).

Residues isoleucine 32 to phenylalanine 52 traverse the membrane as a helical segment. Cysteine 35 is a binding site for heme c. Residues histidine 86 and histidine 100 each contribute to the heme b site. The next 3 membrane-spanning stretches (helical) occupy residues alanine 90–phenylalanine 110, leucine 116–tyrosine 136, and leucine 186–isoleucine 206. 2 residues coordinate heme b: histidine 187 and histidine 202.

Belongs to the cytochrome b family. PetB subfamily. As to quaternary structure, the 4 large subunits of the cytochrome b6-f complex are cytochrome b6, subunit IV (17 kDa polypeptide, PetD), cytochrome f and the Rieske protein, while the 4 small subunits are PetG, PetL, PetM and PetN. The complex functions as a dimer. The cofactor is heme b. It depends on heme c as a cofactor.

Its subcellular location is the plastid. It localises to the chloroplast thylakoid membrane. Its function is as follows. Component of the cytochrome b6-f complex, which mediates electron transfer between photosystem II (PSII) and photosystem I (PSI), cyclic electron flow around PSI, and state transitions. The chain is Cytochrome b6 from Chaetosphaeridium globosum (Charophycean green alga).